Here is a 935-residue protein sequence, read N- to C-terminus: Formin-I (935 aa).

Residues Gln35 to Gln76 are a coiled coil. 3 disordered regions span residues Ser52–Ser78, Leu380–Pro511, and Lys561–Ser590. Positions Lys384 to Ser407 are enriched in low complexity. A compositionally biased stretch (polar residues) spans Ile418–Pro428. The segment covering Asp431–Val443 has biased composition (basic and acidic residues). Polar residues predominate over residues Asn444–Thr454. The FH1 domain maps to Asn444–Gly505. Pro residues predominate over residues Ser456–Ser482. Residues Leu484–Asn499 show a composition bias toward polar residues. The FH2 domain maps to Gly506–Lys935. A compositionally biased stretch (low complexity) spans Asn568–Asn583. 2 coiled-coil regions span residues Ser702–Val730 and Gln803–Leu834.

The protein belongs to the formin homology family. Diaphanous subfamily.

Its function is as follows. Formins play an important role in the nucleation of actin and the formation of linear actin filaments. In Dictyostelium discoideum (Social amoeba), this protein is Formin-I (forI).